A 421-amino-acid chain; its full sequence is Subtilisin-like protease 2 (421 aa).

The N-terminal stretch at 1-16 (MQLLNFGLLLLPFVAG) is a signal peptide. Residues 17–122 (DLAPQPEPLL…VHPDQHFYLA (106 aa)) constitute a propeptide that is removed on maturation. Positions 36–121 (QYLVTLKEGL…SVHPDQHFYL (86 aa)) constitute an Inhibitor I9 domain. Residues 131–421 (RWGLGYMSSK…ERKCKLPKYY (291 aa)) form the Peptidase S8 domain. Catalysis depends on Asp-169, which acts as the Charge relay system. N-linked (GlcNAc...) asparagine glycosylation occurs at Asn-192. His-201 acts as the Charge relay system in catalysis. Asn-248, Asn-261, and Asn-348 each carry an N-linked (GlcNAc...) asparagine glycan. Ser-357 acts as the Charge relay system in catalysis. Residue Asn-388 is glycosylated (N-linked (GlcNAc...) asparagine).

The protein belongs to the peptidase S8 family.

The protein resides in the secreted. Functionally, secreted subtilisin-like serine protease with keratinolytic activity that contributes to pathogenicity. This Trichophyton rubrum (Athlete's foot fungus) protein is Subtilisin-like protease 2 (SUB2).